The primary structure comprises 286 residues: Replication protein RepA (286 aa).

It belongs to the initiator RepB protein family.

Functionally, repA is essential for origin function, autoregulates its own synthesis from the promoter, and, when overproduced, blocks origin function. This chain is Replication protein RepA (repA), found in Escherichia coli.